Consider the following 459-residue polypeptide: Bifunctional protein GlmU (459 aa).

The interval 1–229 (MLTQEIIIVI…YEEILGINNK (229 aa)) is pyrophosphorylase. UDP-N-acetyl-alpha-D-glucosamine contacts are provided by residues 11–14 (LAAG), Lys25, Gln76, 81–82 (GT), 103–105 (YGD), Gly140, Glu154, and Asn227. Residue Asp105 participates in Mg(2+) binding. Asn227 is a Mg(2+) binding site. The tract at residues 230–250 (LQLSNLEKIFQKKQINKLLIN) is linker. The N-acetyltransferase stretch occupies residues 251–459 (GVTIKDPSHF…MRSKKIIKKN (209 aa)). Positions 333 and 351 each coordinate UDP-N-acetyl-alpha-D-glucosamine. His363 acts as the Proton acceptor in catalysis. Positions 366 and 377 each coordinate UDP-N-acetyl-alpha-D-glucosamine. Acetyl-CoA-binding positions include Ala380, 386–387 (NY), Ser405, and Ala423.

The protein in the N-terminal section; belongs to the N-acetylglucosamine-1-phosphate uridyltransferase family. In the C-terminal section; belongs to the transferase hexapeptide repeat family. As to quaternary structure, homotrimer. Mg(2+) serves as cofactor.

The protein localises to the cytoplasm. The enzyme catalyses alpha-D-glucosamine 1-phosphate + acetyl-CoA = N-acetyl-alpha-D-glucosamine 1-phosphate + CoA + H(+). It catalyses the reaction N-acetyl-alpha-D-glucosamine 1-phosphate + UTP + H(+) = UDP-N-acetyl-alpha-D-glucosamine + diphosphate. It participates in nucleotide-sugar biosynthesis; UDP-N-acetyl-alpha-D-glucosamine biosynthesis; N-acetyl-alpha-D-glucosamine 1-phosphate from alpha-D-glucosamine 6-phosphate (route II): step 2/2. It functions in the pathway nucleotide-sugar biosynthesis; UDP-N-acetyl-alpha-D-glucosamine biosynthesis; UDP-N-acetyl-alpha-D-glucosamine from N-acetyl-alpha-D-glucosamine 1-phosphate: step 1/1. Its pathway is bacterial outer membrane biogenesis; LPS lipid A biosynthesis. Its function is as follows. Catalyzes the last two sequential reactions in the de novo biosynthetic pathway for UDP-N-acetylglucosamine (UDP-GlcNAc). The C-terminal domain catalyzes the transfer of acetyl group from acetyl coenzyme A to glucosamine-1-phosphate (GlcN-1-P) to produce N-acetylglucosamine-1-phosphate (GlcNAc-1-P), which is converted into UDP-GlcNAc by the transfer of uridine 5-monophosphate (from uridine 5-triphosphate), a reaction catalyzed by the N-terminal domain. This is Bifunctional protein GlmU from Buchnera aphidicola subsp. Acyrthosiphon pisum (strain 5A).